The following is a 734-amino-acid chain: Photosystem I P700 chlorophyll a apoprotein A2 (734 aa).

Transmembrane regions (helical) follow at residues 46–69, 135–158, 175–199, 273–291, 330–353, 369–395, 417–439, and 517–535; these read IFAS…FHVA, LYTG…LHLQ, LNHH…HVAI, IAHH…GHMY, IHFQ…QHMY, AALY…IFFI, AIKS…LYVH, and FLVH…LILV. [4Fe-4S] cluster contacts are provided by C559 and C568. 2 consecutive transmembrane segments (helical) span residues 575–596 and 643–665; these read AFYL…YWHW and LSVW…MFLI. The chlorophyll a site is built by H654, M662, and Y670. W671 is a phylloquinone binding site. The helical transmembrane segment at 707 to 727 threads the bilayer; that stretch reads LVGLAHFSVGYIFTYAAFLIA.

Belongs to the PsaA/PsaB family. In terms of assembly, the PsaA/B heterodimer binds the P700 chlorophyll special pair and subsequent electron acceptors. PSI consists of a core antenna complex that captures photons, and an electron transfer chain that converts photonic excitation into a charge separation. The eukaryotic PSI reaction center is composed of at least 11 subunits. The cofactor is P700 is a chlorophyll a/chlorophyll a' dimer, A0 is one or more chlorophyll a, A1 is one or both phylloquinones and FX is a shared 4Fe-4S iron-sulfur center..

The protein resides in the plastid. It localises to the chloroplast thylakoid membrane. It carries out the reaction reduced [plastocyanin] + hnu + oxidized [2Fe-2S]-[ferredoxin] = oxidized [plastocyanin] + reduced [2Fe-2S]-[ferredoxin]. In terms of biological role, psaA and PsaB bind P700, the primary electron donor of photosystem I (PSI), as well as the electron acceptors A0, A1 and FX. PSI is a plastocyanin-ferredoxin oxidoreductase, converting photonic excitation into a charge separation, which transfers an electron from the donor P700 chlorophyll pair to the spectroscopically characterized acceptors A0, A1, FX, FA and FB in turn. Oxidized P700 is reduced on the lumenal side of the thylakoid membrane by plastocyanin. This Liriodendron tulipifera (Tuliptree) protein is Photosystem I P700 chlorophyll a apoprotein A2.